Here is a 436-residue protein sequence, read N- to C-terminus: GTPase Obg (436 aa).

In terms of domain architecture, Obg spans serine 2–leucine 160. The 178-residue stretch at alanine 161–alanine 338 folds into the OBG-type G domain. GTP contacts are provided by residues glycine 167–serine 174, phenylalanine 192–valine 196, aspartate 214–glycine 217, asparagine 284–aspartate 287, and serine 319–isoleucine 321. Mg(2+) contacts are provided by serine 174 and threonine 194. Residues glycine 358 to aspartate 436 form the OCT domain.

Belongs to the TRAFAC class OBG-HflX-like GTPase superfamily. OBG GTPase family. Monomer. Mg(2+) is required as a cofactor.

It localises to the cytoplasm. An essential GTPase which binds GTP, GDP and possibly (p)ppGpp with moderate affinity, with high nucleotide exchange rates and a fairly low GTP hydrolysis rate. Plays a role in control of the cell cycle, stress response, ribosome biogenesis and in those bacteria that undergo differentiation, in morphogenesis control. The protein is GTPase Obg of Streptococcus mutans serotype c (strain ATCC 700610 / UA159).